A 246-amino-acid chain; its full sequence is rRNA methyltransferase 2, mitochondrial (246 aa).

A mitochondrion-targeting transit peptide spans 1–18 (MAGYLKLVCVSFQRQGFH). Residues 83 to 86 (PGAW), D112, 129 to 130 (DV), and D154 contribute to the S-adenosyl-L-methionine site. The active-site Proton acceptor is the K194.

Belongs to the class I-like SAM-binding methyltransferase superfamily. RNA methyltransferase RlmE family. In terms of tissue distribution, widely expressed, with highest expression in muscle, placenta, and heart.

The protein resides in the mitochondrion. The enzyme catalyses uridine(1369) in 16S rRNA + S-adenosyl-L-methionine = 2'-O-methyluridine(1369) in 16S rRNA + S-adenosyl-L-homocysteine + H(+). In terms of biological role, S-adenosyl-L-methionine-dependent 2'-O-ribose methyltransferase that catalyzes the formation of 2'-O-methyluridine at position 1369 (Um1369) in the 16S mitochondrial large subunit ribosomal RNA (mtLSU rRNA), a universally conserved modification in the peptidyl transferase domain of the mtLSU rRNA. This activity may require prior 2'-O-methylguanosine modification at position 1370 (Gm1370) by MRM3. Essential for late-stage assembly of mtLSU required for efficient translation of mitochondrial DNA encoded proteins; methyltransferase activity is not required for this function. Essential for mitochondrial respiratory function. This chain is rRNA methyltransferase 2, mitochondrial, found in Homo sapiens (Human).